Consider the following 1071-residue polypeptide: Ubiquitin carboxyl-terminal hydrolase 7 (1071 aa).

The tract at residues 467–532 (KARLQQEQQQ…MPTTPEIPPP (66 aa)) is disordered. A compositionally biased stretch (low complexity) spans 471-480 (QQEQQQQQQQ). Residues 481-495 (PDSQDSFSAKESSTK) are compositionally biased toward polar residues. 2 stretches are compositionally biased toward pro residues: residues 497-507 (PEPPSWKPPDL) and 516-532 (PPPPPVSMPTTPEIPPP). The 461-residue stretch at 609–1069 (TGLRNLGNTC…DVYVLFYERV (461 aa)) folds into the USP domain. The active-site Nucleophile is C618. Residues 913 to 942 (RMLGGSGKRSSSSTPFSTGGNDSNNSSDYK) form a disordered region. Polar residues predominate over residues 920 to 932 (KRSSSSTPFSTGG). The Proton acceptor role is filled by H1014.

The protein belongs to the peptidase C19 family.

The protein localises to the cytoplasm. It carries out the reaction Thiol-dependent hydrolysis of ester, thioester, amide, peptide and isopeptide bonds formed by the C-terminal Gly of ubiquitin (a 76-residue protein attached to proteins as an intracellular targeting signal).. In terms of biological role, involved in the sorting of ubiquitinated cargo proteins at the multivesicular body (MVB). The chain is Ubiquitin carboxyl-terminal hydrolase 7 (UBP7) from Saccharomyces cerevisiae (strain ATCC 204508 / S288c) (Baker's yeast).